Reading from the N-terminus, the 137-residue chain is Mediator of RNA polymerase II transcription subunit 21 (137 aa).

The disordered stretch occupies residues 37 to 56 (PKDTIAPSKADQPPEVDTLP). Residues 87 to 130 (GLDNSEQDQLQSIKELEEELNVAEKQRQEAVKEKDEVLVKLDQT) adopt a coiled-coil conformation.

Belongs to the Mediator complex subunit 21 family. As to quaternary structure, component of the Mediator complex.

The protein localises to the nucleus. Component of the Mediator complex, a coactivator involved in the regulated transcription of nearly all RNA polymerase II-dependent genes. Mediator functions as a bridge to convey information from gene-specific regulatory proteins to the basal RNA polymerase II transcription machinery. Mediator is recruited to promoters by direct interactions with regulatory proteins and serves as a scaffold for the assembly of a functional preinitiation complex with RNA polymerase II and the general transcription factors. This Neurospora crassa (strain ATCC 24698 / 74-OR23-1A / CBS 708.71 / DSM 1257 / FGSC 987) protein is Mediator of RNA polymerase II transcription subunit 21 (srb-7).